We begin with the raw amino-acid sequence, 153 residues long: Arachidonate 5-lipoxygenase-activating protein (153 aa).

Topologically, residues 1 to 8 (MDQEAMGN) are lumenal. The helical transmembrane segment at 9 to 30 (IVLLAIVTLISVVQNAFFAHKV) threads the bilayer. The Cytoplasmic portion of the chain corresponds to 31–52 (EHESKTHNGRSFQRTGTPAFER). A helical membrane pass occupies residues 53-77 (VYTANQNCVDAYPTFLVVLWSAGLF). Residues 78–80 (CSQ) are Lumenal-facing. A helical membrane pass occupies residues 81–102 (VPAAFAGLMYLFVRQKYFVGYL). Over 103–107 (GERTQ) the chain is Cytoplasmic. An intramembrane segment occupies 108-115 (STPGYIFG). The chain crosses the membrane as a helical span at residues 116–128 (KRIILFLFLMSLA). Residues 129-153 (GIFNYFLILFFGSDFENYIKTITTT) are Lumenal-facing.

It belongs to the MAPEG family. Homotrimer. Interacts with LTC4S and ALOX5.

The protein resides in the nucleus membrane. Its subcellular location is the endoplasmic reticulum membrane. In terms of biological role, required for leukotriene biosynthesis by ALOX5 (5-lipoxygenase). Anchors ALOX5 to the membrane. Binds arachidonic acid, and could play an essential role in the transfer of arachidonic acid to ALOX5. Binds to MK-886, a compound that blocks the biosynthesis of leukotrienes. The sequence is that of Arachidonate 5-lipoxygenase-activating protein (ALOX5AP) from Sus scrofa (Pig).